Here is a 494-residue protein sequence, read N- to C-terminus: 2,3-bisphosphoglycerate-independent phosphoglycerate mutase (494 aa).

Mn(2+) is bound by residues D12 and S62. Catalysis depends on S62, which acts as the Phosphoserine intermediate. Residues H121, 150 to 151 (RD), R181, R187, 252 to 255 (RSDR), and K317 contribute to the substrate site. Residues D384, H388, D425, H426, and H443 each coordinate Mn(2+).

It belongs to the BPG-independent phosphoglycerate mutase family. In terms of assembly, monomer. Mn(2+) is required as a cofactor.

The catalysed reaction is (2R)-2-phosphoglycerate = (2R)-3-phosphoglycerate. The protein operates within carbohydrate degradation; glycolysis; pyruvate from D-glyceraldehyde 3-phosphate: step 3/5. Its function is as follows. Catalyzes the interconversion of 2-phosphoglycerate and 3-phosphoglycerate. This Anaplasma marginale (strain St. Maries) protein is 2,3-bisphosphoglycerate-independent phosphoglycerate mutase.